The sequence spans 23 residues: Mu-conotoxin-like SxIIIB (23 aa).

The residue at position 1 (glutamine 1) is a Pyrrolidone carboxylic acid. 3 disulfide bridges follow: cysteine 3/cysteine 16, cysteine 4/cysteine 21, and cysteine 11/cysteine 22. An Alanine amide modification is found at alanine 23.

It belongs to the conotoxin M superfamily. Expressed by the venom duct.

It localises to the secreted. Mu-conotoxins block voltage-gated sodium channels (Nav). The chain is Mu-conotoxin-like SxIIIB from Conus striolatus (Cone snail).